A 489-amino-acid chain; its full sequence is Oxysterol-binding protein-related protein 1B (489 aa).

Belongs to the OSBP family. As to expression, expressed at low levels in flowers.

May be involved in the transport of sterols. This Arabidopsis thaliana (Mouse-ear cress) protein is Oxysterol-binding protein-related protein 1B (ORP1B).